The following is a 373-amino-acid chain: Meiosis-specific kinetochore protein (373 aa).

2 disordered regions span residues 1–91 (MWPL…QDEK) and 250–276 (STPEKTKKKKTNSSTPGKKNRGLLTST). Residues 77-91 (SLQENRSSEDTQDEK) are compositionally biased toward basic and acidic residues. A POLO box domain (PBD)-binding motif is present at residues 275-277 (STP). The interval 332–335 (EICC) is required for localization to kinetochores.

In terms of assembly, interacts with CENPC. Interacts with PLK1; required for recruitment of PLK1 at kinetochores.

The protein localises to the chromosome. Its subcellular location is the centromere. The protein resides in the kinetochore. Functionally, key regulator of kinetochore function during meiosis I: required both for mono-orientation of kinetochores on sister chromosomes and protection of centromeric cohesin from separase-mediated cleavage. Acts by facilitating kinetochore mono-orientation during meiosis I, when kinetochores on sister chromosomes face the same direction and are thus captured and pulled by spindle fibers from the same pole. Also required to prevent cleavage of cohesin at centromeres during meiosis I, possibly by acting as a regulator of the shugoshin-dependent protection pathway. Acts in collaboration with PLK1: required for PLK1 enrichment to kinetochores. Not required during meiosis II or mitosis. In Homo sapiens (Human), this protein is Meiosis-specific kinetochore protein.